Here is a 590-residue protein sequence, read N- to C-terminus: Histone-binding protein N1/N2 (590 aa).

The tract at residues 1 to 30 (MAEETAALSTEKTEDTSTAPSTSAEKADGI) is disordered. The TPR 1 repeat unit spans residues 36–69 (AKRLMGAGQKHLVMKDVRSAVNLFQEASSLLAKQ). The segment at 102–328 (ALEGMPEDDE…EKETEEEDVG (227 aa)) is disordered. The span at 106–120 (MPEDDEEEAEKEEDP) shows a compositional bias: acidic residues. Basic and acidic residues-rich tracts occupy residues 128 to 250 (LDEK…DAKE) and 262 to 275 (AEEK…ESKE). The span at 293-327 (EKMEEEEEGEDSEENEDGTEENEGTEEKETEEEDV) shows a compositional bias: acidic residues. TPR repeat units follow at residues 357–390 (AQAH…QKEH) and 399–432 (AETH…IEKR). The disordered stretch occupies residues 492–590 (GGSSGFSKEN…METATVESTA (99 aa)). Residues 496–525 (GFSKENGSTSSSSAVEKSGDSTVPVTNCVS) show a composition bias toward polar residues. The Nuclear localization signal motif lies at 531-537 (VRKKRKT). Basic and acidic residues predominate over residues 536–553 (KTEEESPLKDKDAKKSKQ).

It belongs to the NASP family.

It localises to the nucleus. This protein is involved in nucleosome assembly. It is bound to H3 and H4 in the absence of DNA, but released from H3 and H4 in the presence of DNA. The protein is Histone-binding protein N1/N2 of Xenopus laevis (African clawed frog).